The primary structure comprises 207 residues: MNVARFLVEKHTLHVIIDFILSKVSNQQSNLAQHQRVYTGEKPYKCNEWGKALSGKSSLFYHQAIHGVGKLCKCNDCHKVFSNATTIANHWRIHNEDRSYKCNKCGKIFRHRSYLAVYQRTHTGEKPYKYHDCGKVFSQASSYAKHRRIHTGEKPHKCDDCGKVLTSRSHLIRHQRIHTGQKSYKCLKCGKVFSLWALHAEHQKIHF.

The C2H2-type 1 zinc-finger motif lies at 72-94; it reads CKCNDCHKVFSNATTIANHWRIH. The segment at 100–122 adopts a C2H2-type 2; degenerate zinc-finger fold; that stretch reads YKCNKCGKIFRHRSYLAVYQRTH. The C2H2-type 3; degenerate zinc finger occupies 128-150; the sequence is YKYHDCGKVFSQASSYAKHRRIH. 2 C2H2-type zinc fingers span residues 156 to 178 and 184 to 206; these read HKCDDCGKVLTSRSHLIRHQRIH and YKCLKCGKVFSLWALHAEHQKIH.

The protein belongs to the krueppel C2H2-type zinc-finger protein family.

It is found in the nucleus. Its function is as follows. May be involved in transcriptional regulation. This is Putative zinc finger protein 137 (ZNF137P) from Homo sapiens (Human).